Here is a 108-residue protein sequence, read N- to C-terminus: Replication initiation control protein YabA (108 aa).

Positions 83, 85, 99, and 102 each coordinate Zn(2+).

This sequence belongs to the YabA family. In terms of assembly, homotetramer. Interacts with both DnaA and DnaN, acting as a bridge between these two proteins. Zn(2+) is required as a cofactor.

It is found in the cytoplasm. Its subcellular location is the nucleoid. Involved in control of chromosome replication initiation. Inhibits the cooperative binding of DnaA to the oriC region, thus negatively regulating initiation of chromosome replication. Inhibits the ability of DnaA-ATP to form a helix on DNA; does not disassemble preformed DnaA-DNA helices. Decreases the residence time of DnaA on the chromosome at its binding sites (oriC, replication forks and promoter-binding sites). Tethers DnaA to the replication machinery via the DNA polymerase beta sliding clamp subunit (dnaN). Associates with oriC and other DnaA targets on the chromosome in a DnaA-dependent manner. The sequence is that of Replication initiation control protein YabA from Lactococcus lactis subsp. lactis (strain IL1403) (Streptococcus lactis).